Reading from the N-terminus, the 133-residue chain is FPRL1 inhibitory protein (133 aa).

A signal peptide spans 1–28 (MKKNITKTIIASTVIAAGLLTQTNDAKA).

It belongs to the CHIPS/FLIPr family.

It is found in the secreted. May be involved in countering the first line of host defense mechanisms. Impairs the leukocyte response to FPRL1 agonists by binding directly to host FPRL1. Exerts, in vitro, anti-inflammatory activity by inhibiting calcium mobilization and cell migration toward chemoattractants. This is FPRL1 inhibitory protein (flr) from Staphylococcus aureus (strain Newman).